The chain runs to 446 residues: Tubulin beta-4 chain (446 aa).

GTP-binding residues include Q11, E69, S138, G142, T143, G144, N204, and N226. E69 is a Mg(2+) binding site. The span at 417–426 shows a compositional bias: polar residues; sequence DLVSEYQQYQ. Residues 417–446 form a disordered region; it reads DLVSEYQQYQDATADEEGDYEDEDEALHDE. Residues 429–446 are compositionally biased toward acidic residues; sequence TADEEGDYEDEDEALHDE.

It belongs to the tubulin family. In terms of assembly, dimer of alpha and beta chains. A typical microtubule is a hollow water-filled tube with an outer diameter of 25 nm and an inner diameter of 15 nM. Alpha-beta heterodimers associate head-to-tail to form protofilaments running lengthwise along the microtubule wall with the beta-tubulin subunit facing the microtubule plus end conferring a structural polarity. Microtubules usually have 13 protofilaments but different protofilament numbers can be found in some organisms and specialized cells. The cofactor is Mg(2+).

Its subcellular location is the cytoplasm. The protein localises to the cytoskeleton. Functionally, tubulin is the major constituent of microtubules, a cylinder consisting of laterally associated linear protofilaments composed of alpha- and beta-tubulin heterodimers. Microtubules grow by the addition of GTP-tubulin dimers to the microtubule end, where a stabilizing cap forms. Below the cap, tubulin dimers are in GDP-bound state, owing to GTPase activity of alpha-tubulin. This chain is Tubulin beta-4 chain (TUBB4), found in Eleusine indica (Goosegrass).